A 349-amino-acid chain; its full sequence is Large ribosomal subunit protein uL2mz, N-terminal part (349 aa).

It belongs to the universal ribosomal protein uL2 family. In terms of assembly, component of the mitochondrial ribosome large subunit.

It localises to the mitochondrion. The sequence is that of Large ribosomal subunit protein uL2mz, N-terminal part from Arabidopsis thaliana (Mouse-ear cress).